Reading from the N-terminus, the 608-residue chain is Granule-bound starch synthase 1, chloroplastic/amyloplastic (608 aa).

The N-terminal 76 residues, 1–76 (MATITASHFV…EGGMAAGTIV (76 aa)), are a transit peptide targeting the chloroplast. ADP-alpha-D-glucose is bound at residue K96.

Belongs to the glycosyltransferase 1 family. Bacterial/plant glycogen synthase subfamily.

It localises to the plastid. It is found in the chloroplast. The protein resides in the amyloplast. The catalysed reaction is an NDP-alpha-D-glucose + [(1-&gt;4)-alpha-D-glucosyl](n) = [(1-&gt;4)-alpha-D-glucosyl](n+1) + a ribonucleoside 5'-diphosphate + H(+). The protein operates within glycan biosynthesis; starch biosynthesis. In terms of biological role, required for the synthesis of amylose. The protein is Granule-bound starch synthase 1, chloroplastic/amyloplastic (WAXY) of Ipomoea batatas (Sweet potato).